The chain runs to 186 residues: Ribosome-recycling factor (186 aa).

It belongs to the RRF family.

The protein localises to the cytoplasm. Functionally, responsible for the release of ribosomes from messenger RNA at the termination of protein biosynthesis. May increase the efficiency of translation by recycling ribosomes from one round of translation to another. This chain is Ribosome-recycling factor, found in Acidovorax ebreus (strain TPSY) (Diaphorobacter sp. (strain TPSY)).